The sequence spans 401 residues: Nicotinate phosphoribosyltransferase (401 aa).

The residue at position 221 (His221) is a Phosphohistidine; by autocatalysis.

The protein belongs to the NAPRTase family. Transiently phosphorylated on a His residue during the reaction cycle. Phosphorylation strongly increases the affinity for substrates and increases the rate of nicotinate D-ribonucleotide production. Dephosphorylation regenerates the low-affinity form of the enzyme, leading to product release.

The catalysed reaction is nicotinate + 5-phospho-alpha-D-ribose 1-diphosphate + ATP + H2O = nicotinate beta-D-ribonucleotide + ADP + phosphate + diphosphate. It participates in cofactor biosynthesis; NAD(+) biosynthesis; nicotinate D-ribonucleotide from nicotinate: step 1/1. Functionally, catalyzes the synthesis of beta-nicotinate D-ribonucleotide from nicotinate and 5-phospho-D-ribose 1-phosphate at the expense of ATP. The polypeptide is Nicotinate phosphoribosyltransferase (Yersinia enterocolitica serotype O:8 / biotype 1B (strain NCTC 13174 / 8081)).